We begin with the raw amino-acid sequence, 310 residues long: Transcription factor MYB53 (310 aa).

2 HTH myb-type domains span residues 9–61 (ETGL…TNYL) and 62–116 (RPDI…KKKL). 2 DNA-binding regions (H-T-H motif) span residues 37-61 (WSALPKLAGLNRCGKSCRLRWTNYL) and 89-112 (WSMIASHLPGRTDNEIKNFWNTHL).

Interacts with FBX5. Highly expressed in roots and at lower levels in leaves, stems and flowers.

The protein resides in the nucleus. Its function is as follows. Probable transcription factor. In Arabidopsis thaliana (Mouse-ear cress), this protein is Transcription factor MYB53.